A 240-amino-acid polypeptide reads, in one-letter code: Proteasome subunit alpha (240 aa).

It belongs to the peptidase T1A family. The 20S proteasome core is composed of 14 alpha and 14 beta subunits that assemble into four stacked heptameric rings, resulting in a barrel-shaped structure. The two inner rings, each composed of seven catalytic beta subunits, are sandwiched by two outer rings, each composed of seven alpha subunits. The catalytic chamber with the active sites is on the inside of the barrel. Has a gated structure, the ends of the cylinder being occluded by the N-termini of the alpha-subunits. Is capped at one or both ends by the proteasome regulatory ATPase, PAN.

Its subcellular location is the cytoplasm. Its activity is regulated as follows. The formation of the proteasomal ATPase PAN-20S proteasome complex, via the docking of the C-termini of PAN into the intersubunit pockets in the alpha-rings, triggers opening of the gate for substrate entry. Interconversion between the open-gate and close-gate conformations leads to a dynamic regulation of the 20S proteasome proteolysis activity. Functionally, component of the proteasome core, a large protease complex with broad specificity involved in protein degradation. The protein is Proteasome subunit alpha of Methanoregula boonei (strain DSM 21154 / JCM 14090 / 6A8).